The chain runs to 309 residues: Porphobilinogen deaminase (309 aa).

At cysteine 244 the chain carries S-(dipyrrolylmethanemethyl)cysteine.

The protein belongs to the HMBS family. In terms of assembly, monomer. Requires dipyrromethane as cofactor.

It carries out the reaction 4 porphobilinogen + H2O = hydroxymethylbilane + 4 NH4(+). Its pathway is porphyrin-containing compound metabolism; protoporphyrin-IX biosynthesis; coproporphyrinogen-III from 5-aminolevulinate: step 2/4. Tetrapolymerization of the monopyrrole PBG into the hydroxymethylbilane pre-uroporphyrinogen in several discrete steps. The polypeptide is Porphobilinogen deaminase (Listeria innocua serovar 6a (strain ATCC BAA-680 / CLIP 11262)).